A 416-amino-acid polypeptide reads, in one-letter code: Histidinol dehydrogenase (416 aa).

NAD(+)-binding residues include Y117, Q178, and N201. The substrate site is built by T224, Q246, and H249. The Zn(2+) site is built by Q246 and H249. Residues E314 and H315 each act as proton acceptor in the active site. Residues H315, D348, E402, and H407 each coordinate substrate. D348 is a binding site for Zn(2+). Zn(2+) is bound at residue H407.

It belongs to the histidinol dehydrogenase family. Zn(2+) serves as cofactor.

It carries out the reaction L-histidinol + 2 NAD(+) + H2O = L-histidine + 2 NADH + 3 H(+). The protein operates within amino-acid biosynthesis; L-histidine biosynthesis; L-histidine from 5-phospho-alpha-D-ribose 1-diphosphate: step 9/9. Its function is as follows. Catalyzes the sequential NAD-dependent oxidations of L-histidinol to L-histidinaldehyde and then to L-histidine. In Staphylococcus aureus (strain bovine RF122 / ET3-1), this protein is Histidinol dehydrogenase.